The sequence spans 166 residues: Small heat shock protein OV25-2 (166 aa).

The sHSP domain occupies 38-149; it reads LNECNIGNSL…ASRNIPIRAS (112 aa). The tract at residues 140-166 is disordered; the sequence is ASRNIPIRASPKEPEANQKSAINDAKQ.

It belongs to the small heat shock protein (HSP20) family.

The chain is Small heat shock protein OV25-2 (OV25-2) from Onchocerca volvulus.